Here is a 538-residue protein sequence, read N- to C-terminus: Bifunctional purine biosynthesis protein PurH (538 aa).

The region spanning 6 to 158 (KHIPAPDLHR…KNHAYVATVV (153 aa)) is the MGS-like domain.

The protein belongs to the PurH family.

The enzyme catalyses (6R)-10-formyltetrahydrofolate + 5-amino-1-(5-phospho-beta-D-ribosyl)imidazole-4-carboxamide = 5-formamido-1-(5-phospho-D-ribosyl)imidazole-4-carboxamide + (6S)-5,6,7,8-tetrahydrofolate. It carries out the reaction IMP + H2O = 5-formamido-1-(5-phospho-D-ribosyl)imidazole-4-carboxamide. It participates in purine metabolism; IMP biosynthesis via de novo pathway; 5-formamido-1-(5-phospho-D-ribosyl)imidazole-4-carboxamide from 5-amino-1-(5-phospho-D-ribosyl)imidazole-4-carboxamide (10-formyl THF route): step 1/1. The protein operates within purine metabolism; IMP biosynthesis via de novo pathway; IMP from 5-formamido-1-(5-phospho-D-ribosyl)imidazole-4-carboxamide: step 1/1. The polypeptide is Bifunctional purine biosynthesis protein PurH (Brucella abortus (strain S19)).